Reading from the N-terminus, the 384-residue chain is Mannitol-1-phosphate 5-dehydrogenase (384 aa).

4 to 15 (AVHFGAGNIGRG) lines the NAD(+) pocket.

It belongs to the mannitol dehydrogenase family.

The enzyme catalyses D-mannitol 1-phosphate + NAD(+) = beta-D-fructose 6-phosphate + NADH + H(+). The sequence is that of Mannitol-1-phosphate 5-dehydrogenase from Lacticaseibacillus paracasei (strain ATCC 334 / BCRC 17002 / CCUG 31169 / CIP 107868 / KCTC 3260 / NRRL B-441) (Lactobacillus paracasei).